An 810-amino-acid chain; its full sequence is Zinc finger transcription factor YRR1 (810 aa).

A disordered region spans residues 1 to 47 (MKRRSDALLGSFQATNVTPPSDNSNSTAGGANGSNSGTPTSTSGKKR). Over residues 12–22 (FQATNVTPPSD) the composition is skewed to polar residues. Positions 23 to 43 (NSNSTAGGANGSNSGTPTSTS) are enriched in low complexity. Residues 54–82 (CGFCRRRKLRCDQQKPMCSTCISRNLTTC) constitute a DNA-binding region (zn(2)-C6 fungal-type). The tract at residues 722-742 (ELDPQSDNPSSEAKIVSDRQR) is disordered.

The protein resides in the cytoplasm. It is found in the nucleus. Transcription factor involved in the regulation of multidrug resistance genes. Acts in concert with YRR1. This chain is Zinc finger transcription factor YRR1 (YRR1), found in Saccharomyces cerevisiae (strain ATCC 204508 / S288c) (Baker's yeast).